A 112-amino-acid polypeptide reads, in one-letter code: cAMP-regulated phosphoprotein 19 (112 aa).

At methionine 1 the chain carries N-acetylmethionine. Residues methionine 1 to alanine 11 show a composition bias toward low complexity. Positions methionine 1 to leucine 49 are disordered. Serine 2 is subject to N-acetylserine. Phosphoserine occurs at positions 2 and 23. A compositionally biased stretch (basic and acidic residues) spans glutamate 12–leucine 32. Serine 62 and serine 104 each carry phosphoserine; by GWL. A disordered region spans residues methionine 72–glycine 112. Serine 104 carries the post-translational modification Phosphoserine; by PKA. Lysine 109 is modified (N6-acetyllysine).

In terms of assembly, interacts (when phosphorylated at Ser-62) with PPP2R2D. Interacts with SNCA. Interacts with PPP2R2A; the interaction is direct and this interaction inhibits PP2A activity. Post-translationally, phosphorylation at Ser-62 by MASTL/GWL during mitosis is essential for interaction with PPP2R2D (PR55-delta) and subsequent inactivation of PP2A. Phosphorylated by PKA. As to expression, isoform ARPP-19 is found in all brain regions and also present in non-neuronal tissues. Isoform ARPP-16 is enriched in the caudate nucleus, found in low levels in cerebral cortex.

Its subcellular location is the cytoplasm. In terms of biological role, protein phosphatase inhibitor that specifically inhibits protein phosphatase 2A (PP2A) during mitosis. Inhibition of PP2A is enhanced when ARPP19 is phosphorylated. When phosphorylated at Ser-62 during mitosis, specifically interacts with PPP2R2D (PR55-delta) and inhibits its activity, leading to inactivation of PP2A, an essential condition to keep cyclin-B1-CDK1 activity high during M phase. May indirectly enhance GAP-43 expression. The protein is cAMP-regulated phosphoprotein 19 (ARPP19) of Bos taurus (Bovine).